The chain runs to 231 residues: MTDISIPAGDDGSFSAYVAKPAGGGPAPGLVVIQEIFGVNQVMRDLCDAFAAQGWLAVCPDLFWRQEPGVQITDKTQEEWNRAFALMNGMDQDKRWTTSRPPCRGCARIRIAPAKRVGRLLLGRRLAFMMAARSDSDANVSYYGVGLDGLVGEAASITKPLLMHIAEKDQFVPAEAREKVLAAVKGNPNVTAHVYPGVDHAFARAGGAHFEPEAAELANGRTAAFFKQHLG.

Residues Asp-169 and His-200 contribute to the active site.

Belongs to the dienelactone hydrolase family.

The enzyme catalyses 2-(5-oxo-2,5-dihydrofuran-2-ylidene)acetate + H2O = 4-oxohex-2-enedioate + H(+). The chain is Putative carboxymethylenebutenolidase from Azospirillum brasilense.